The primary structure comprises 363 residues: U-box domain-containing protein 62 (363 aa).

A disordered region spans residues 74–117 (KPIIGNPNDSGGSDGEDDVDVEEEDEDDDLDGNEGDIGMNKDAG). A compositionally biased stretch (acidic residues) spans 87–107 (DGEDDVDVEEEDEDDDLDGNE). One can recognise a U-box domain in the interval 181-253 (SLRTILSDPT…QAFCREENSQ (73 aa)). Positions 343-363 (AKAPEDPSAKATPNKMVSNWL) are disordered.

The catalysed reaction is S-ubiquitinyl-[E2 ubiquitin-conjugating enzyme]-L-cysteine + [acceptor protein]-L-lysine = [E2 ubiquitin-conjugating enzyme]-L-cysteine + N(6)-ubiquitinyl-[acceptor protein]-L-lysine.. It functions in the pathway protein modification; protein ubiquitination. Functionally, functions as an E3 ubiquitin ligase. The polypeptide is U-box domain-containing protein 62 (PUB62) (Arabidopsis thaliana (Mouse-ear cress)).